The chain runs to 221 residues: PKHD-type hydroxylase PMN2A_0775 (221 aa).

Positions 80–174 constitute a Fe2OG dioxygenase domain; sequence LIHGVMFTQS…RHVCVGWIQS (95 aa). The Fe cation site is built by H98, D100, and H155. R165 is a 2-oxoglutarate binding site.

Requires Fe(2+) as cofactor. L-ascorbate serves as cofactor.

The protein is PKHD-type hydroxylase PMN2A_0775 of Prochlorococcus marinus (strain NATL2A).